A 364-amino-acid chain; its full sequence is Transcription factor SPEECHLESS (364 aa).

The disordered stretch occupies residues 35 to 109 (GEISPTAAST…QKMSHVTVER (75 aa)). S38 carries the post-translational modification Phosphoserine; by ASK7. A Phosphothreonine; by ASK7 modification is found at T40. The segment covering 40-53 (TAASTPKDGTTSSK) has biased composition (polar residues). S43 bears the Phosphoserine; by ASK7 mark. T44 carries the post-translational modification Phosphothreonine; by ASK7. S65 carries the phosphoserine; by ASK7 modification. Residues 79 to 92 (EDEEEEDGDGEAEE) are compositionally biased toward acidic residues. The segment at 99 to 112 (QQKMSHVTVERNRR) is basic motif. The bHLH domain maps to 99-150 (QQKMSHVTVERNRRKQMNEHLTVLRSLMPCFYVKRGDQASIIGGVVEYISEL). Positions 113 to 150 (KQMNEHLTVLRSLMPCFYVKRGDQASIIGGVVEYISEL) are helix-loop-helix motif. Phosphoserine; by ASK7 is present on S171. The tract at residues 171–227 (SPRVVPSPRPSPPVLSPRKPPLSPRINHHQIHHHLLLPPISPRTPQPTSPYRAIPPQ) is disordered. A compositionally biased stretch (pro residues) spans 175-193 (VPSPRPSPPVLSPRKPPLS). At S177 the chain carries Phosphoserine; by ASK7, MPK3 and MPK6. At S181 the chain carries Phosphoserine; by ASK7. At S186 the chain carries Phosphoserine; by CDKA-1, ASK7, MPK3 and MPK6. Position 193 is a phosphoserine; by MPK3 and MPK6 (S193). Over residues 196-205 (INHHQIHHHL) the composition is skewed to basic residues. Over residues 209-218 (PISPRTPQPT) the composition is skewed to pro residues. S211 is modified (phosphoserine; by MPK3 and MPK6). T214 carries the phosphothreonine; by ASK7, MPK3 and MPK6 modification. At S219 the chain carries Phosphoserine; by ASK7, MPK3 and MPK6.

In terms of assembly, homodimer. Forms dimers with SCRM and SCRM2. May interact with CDKA-1. Post-translationally, phosphorylated by ASK7/BIN2 and ASK3/SK12; this post-translational modification inhibits activity and limit epidermal cell proliferation. Phosphorylation by MPK3 and MPK6 leads to the inhibition of stomatal fate and to degradation. Stabilized by CDKA-1-mediated phosphorylation at Ser-186 which promotes stomatal development. Expressed in developing leaf epidermis. Reduced accumulation in the stomatal lineage ground cells (SLGCs) where BASL is polarized in the cell cortex. Observed in small cells of non-protruding hypocotyl cell files and of developing cotyledon epidermis. Restricted to meristemoids (stomatal precursor cell) in leaves epidermis, mostly in dividing cells of non-protruding cell files.

Its subcellular location is the nucleus. With respect to regulation, negatively regulated through phosphorylation by the MAPK module. Activity is constrained by polarized BASL in stomatal lineage ground cells (SLGCs) undergoing ACD. Functionally, transcription factor acting as an integration node for stomata and brassinosteroid (BR) signaling pathways to control stomatal initiation and development. Activates transcription when in the presence of SCRM/ICE1. Functions as a dimer with SCRM or SCRM2 during stomatal initiation. Required for the initiation, the spacing and the formation of stomata, by promoting the first asymmetric cell divisions. Together with FMA and MUTE, modulates the stomata formation. Involved in the regulation of growth reduction under osmotic stress (e.g. mannitol), associated with a quick decrease of meristemoid mother cells (MMCs) number lower stomatal index and density. The polypeptide is Transcription factor SPEECHLESS (Arabidopsis thaliana (Mouse-ear cress)).